The sequence spans 200 residues: Small ribosomal subunit protein uS4 (200 aa).

Positions 22 to 43 (TGKELERRPYAPGQHGPTQRKK) are disordered. The S4 RNA-binding domain occupies 92–170 (QRLDNIVYRL…VPEYVTFDAE (79 aa)).

This sequence belongs to the universal ribosomal protein uS4 family. As to quaternary structure, part of the 30S ribosomal subunit. Contacts protein S5. The interaction surface between S4 and S5 is involved in control of translational fidelity.

In terms of biological role, one of the primary rRNA binding proteins, it binds directly to 16S rRNA where it nucleates assembly of the body of the 30S subunit. Functionally, with S5 and S12 plays an important role in translational accuracy. The sequence is that of Small ribosomal subunit protein uS4 from Listeria monocytogenes serotype 4b (strain F2365).